The chain runs to 1470 residues: Calmodulin-regulated spectrin-associated protein 2 (1470 aa).

In terms of domain architecture, Calponin-homology (CH) spans 222-335 (WKLVPARYRK…FMAELFWWFE (114 aa)). A disordered region spans residues 374–397 (SSSSSDFTSRYTRPQTHSSVSGGI). Over residues 380–390 (FTSRYTRPQTH) the composition is skewed to polar residues. S402 and S404 each carry phosphoserine. Position 412 is a phosphothreonine (T412). Phosphoserine is present on residues S450, S581, S582, S594, and S656. 2 disordered regions span residues 580 to 622 (QSSP…EDSS) and 648 to 712 (ASNP…EGSE). The residue at position 661 (T661) is a Phosphothreonine. S663 bears the Phosphoserine mark. Residues 663-682 (STKSQPGSSASSSSGVKMTS) are compositionally biased toward low complexity. Basic and acidic residues predominate over residues 686–696 (QKFRKLNHTDG). A coiled-coil region spans residues 739–776 (LLASEMVHLRMRLEEKRRAIEAQKKKMEAAFTKQRQKM). Over residues 796–835 (REEAAGAEDEKVYTDRAKEKESQKMDGQRSKSLADIKESM) the composition is skewed to basic and acidic residues. The disordered stretch occupies residues 796–864 (REEAAGAEDE…QWNLTSPSEE (69 aa)). The residue at position 845 (S845) is a Phosphoserine. Positions 870-909 (ELLEYTKSIEKLNSSLHFLQQEMQRLSLQQEMLMQMREQQ) form a coiled coil. Residues 905–1016 (MREQQSWVIS…IQTRSFVCFG (112 aa)) form an MBD region region. A phosphoserine mark is found at S914 and S919. Disordered stretches follow at residues 930–1059 (RQAG…PLES) and 1078–1099 (NEDQ…PTAP). Residues 935–946 (SSAAAPFSADSP) show a composition bias toward low complexity. The span at 952-971 (SPQSSTRKSASFSVKNQRTP) shows a compositional bias: polar residues. A phosphothreonine mark is found at T979, T984, and T986. S990 and S1001 each carry phosphoserine. Residues 1001–1011 (SPSQVPIQTRS) are compositionally biased toward polar residues. Composition is skewed to basic and acidic residues over residues 1020–1037 (EPQK…EPSE) and 1044–1056 (SCDH…EVKP). A compositionally biased stretch (pro residues) spans 1086 to 1098 (TDPPPKPVFPPTA). At S1129 the chain carries Phosphoserine. Positions 1147–1219 (KDDQKAENDM…REFIRQEYMR (73 aa)) form a coiled coil. Residues 1167 to 1233 (RLRREKETQL…KLMEDMDTVI (67 aa)) show a composition bias toward basic and acidic residues. The tract at residues 1167-1327 (RLRREKETQL…TTSSVASGTE (161 aa)) is disordered. Residues 1268 to 1280 (SSLSLASLNTGDT) are compositionally biased toward polar residues. 3 positions are modified to phosphoserine: S1294, S1300, and S1302. A compositionally biased stretch (polar residues) spans 1315–1327 (NASTTSSVASGTE). The region spanning 1330 to 1464 (GPKLYKEPSA…QTKRPVTPKK (135 aa)) is the CKK domain.

Belongs to the CAMSAP1 family. In terms of assembly, interacts with CAMSAP3. Interacts with KATNA1 and KATNB1; leading to regulate the length of CAMSAP2-decorated microtubule stretches. Interacts with a complex formed by AKAP9 and PDE4DIP; this interaction, which is PDE4DIP isoform-specific, recruits CAMSAP2 to the Golgi. Interacts with MAPRE1/EB1. In terms of tissue distribution, present in the soma, axon, and dendritic shaft of hippocampal neurons (at protein level).

Its subcellular location is the cytoplasm. The protein resides in the cytoskeleton. It is found in the golgi apparatus. The protein localises to the cilium basal body. Its function is as follows. Key microtubule-organizing protein that specifically binds the minus-end of non-centrosomal microtubules and regulates their dynamics and organization. Specifically recognizes growing microtubule minus-ends and autonomously decorates and stabilizes microtubule lattice formed by microtubule minus-end polymerization. Acts on free microtubule minus-ends that are not capped by microtubule-nucleating proteins or other factors and protects microtubule minus-ends from depolymerization. In addition, it also reduces the velocity of microtubule polymerization. Through the microtubule cytoskeleton, also regulates the organization of cellular organelles including the Golgi and the early endosomes. Essential for the tethering, but not for nucleation of non-centrosomal microtubules at the Golgi: together with Golgi-associated proteins AKAP9 and PDE4DIP, required to tether non-centrosomal minus-end microtubules to the Golgi, an important step for polarized cell movement. Also acts as a regulator of neuronal polarity and development: localizes to non-centrosomal microtubule minus-ends in neurons and stabilizes non-centrosomal microtubules, which is required for neuronal polarity, axon specification and dendritic branch formation. Through the microtubule cytoskeleton, regulates the autophagosome transport. The polypeptide is Calmodulin-regulated spectrin-associated protein 2 (Rattus norvegicus (Rat)).